Consider the following 224-residue polypeptide: Thiamine-phosphate synthase (224 aa).

Residues 44-48 (QFREK) and Asn-79 each bind 4-amino-2-methyl-5-(diphosphooxymethyl)pyrimidine. Residues Asp-80 and Asp-99 each coordinate Mg(2+). Residue Ser-117 coordinates 4-amino-2-methyl-5-(diphosphooxymethyl)pyrimidine. 143-145 (TST) contributes to the 2-[(2R,5Z)-2-carboxy-4-methylthiazol-5(2H)-ylidene]ethyl phosphate binding site. Lys-146 contributes to the 4-amino-2-methyl-5-(diphosphooxymethyl)pyrimidine binding site. 2-[(2R,5Z)-2-carboxy-4-methylthiazol-5(2H)-ylidene]ethyl phosphate is bound by residues Gly-175 and 195 to 196 (IS).

The protein belongs to the thiamine-phosphate synthase family. Requires Mg(2+) as cofactor.

The enzyme catalyses 2-[(2R,5Z)-2-carboxy-4-methylthiazol-5(2H)-ylidene]ethyl phosphate + 4-amino-2-methyl-5-(diphosphooxymethyl)pyrimidine + 2 H(+) = thiamine phosphate + CO2 + diphosphate. It catalyses the reaction 2-(2-carboxy-4-methylthiazol-5-yl)ethyl phosphate + 4-amino-2-methyl-5-(diphosphooxymethyl)pyrimidine + 2 H(+) = thiamine phosphate + CO2 + diphosphate. It carries out the reaction 4-methyl-5-(2-phosphooxyethyl)-thiazole + 4-amino-2-methyl-5-(diphosphooxymethyl)pyrimidine + H(+) = thiamine phosphate + diphosphate. Its pathway is cofactor biosynthesis; thiamine diphosphate biosynthesis; thiamine phosphate from 4-amino-2-methyl-5-diphosphomethylpyrimidine and 4-methyl-5-(2-phosphoethyl)-thiazole: step 1/1. In terms of biological role, condenses 4-methyl-5-(beta-hydroxyethyl)thiazole monophosphate (THZ-P) and 2-methyl-4-amino-5-hydroxymethyl pyrimidine pyrophosphate (HMP-PP) to form thiamine monophosphate (TMP). This chain is Thiamine-phosphate synthase, found in Bacillus cereus (strain ATCC 10987 / NRS 248).